The primary structure comprises 274 residues: PTS system sorbose-specific EIID component (274 aa).

Residues 4-273 enclose the PTS EIID domain; the sequence is KKITQGDLVS…GIIGNALGFL (270 aa). Helical transmembrane passes span 61 to 81, 99 to 119, 126 to 146, 186 to 206, 226 to 246, and 253 to 273; these read LVFF…TAAM, IKVG…WGTL, LGAS…FFIF, ILGL…NVPL, ILDQ…MVRL, and PVWL…LGFL.

Its subcellular location is the cell inner membrane. The phosphoenolpyruvate-dependent sugar phosphotransferase system (PTS), a major carbohydrate active transport system, catalyzes the phosphorylation of incoming sugar substrates concomitant with their translocation across the cell membrane. The enzyme II SorABFM PTS system is involved in sorbose transport. The sequence is that of PTS system sorbose-specific EIID component from Klebsiella pneumoniae.